A 770-amino-acid polypeptide reads, in one-letter code: MLPGLALLLLAAWTARALEVPTDGNAGLLAEPQIAMFCGRLNMHMNVQNGKWDSDPSGTKTCIDTKEGILQYCQEVYPELQITNVVEANQPVTIQNWCKRGRKQCKTHPHFVIPYRCLVGEFVSDALLVPDKCKFLHQERMDVCETHLHWHTVAKETCSEKSTNLHDYGMLLPCGIDKFRGVEFVCCPLAEESDNVDSADAEEDDSDVWWGGADTDYADGSEDKVVEVAEEEEVAEVEEEEADDDEDDEDGDEVEEEAEEPYEEATERTTSIATTTTTTTESVEEVVREVCSEQAETGPCRAMISRWYFDVTEGKCAPFFYGGCGGNRNNFDTEEYCMAVCGSVMSQSLRKTTREPLTRDPVKLPTTAASTPDAVDKYLETPGDENEHAHFQKAKERLEAKHRERMSQVMREWEEAERQAKNLPKADKKAVIQHFQEKVESLEQEAANERQQLVETHMARVEAMLNDRRRLALENYITALQAVPPRPRHVFNMLKKYVRAEQKDRQHTLKHFEHVRMVDPKKAAQIRSQVMTHLRVIYERMNQSLSLLYNVPAVAEEIQDEVDELLQKEQNYSDDVLANMISEPRISYGNDALMPSLTETKTTVELLPVNGEFSLDDLQPWHSFGADSVPANTENEVEPVDARPAADRGLTTRPGSGLTNIKTEEISEVKMDAEFRHDSGYEVHHQKLVFFAEDVGSNKGAIIGLMVGGVVIATVIVITLVMLKKKQYTSIHHGVVEVDAAVTPEERHLSKMQQNGYENPTYKFFEQMQN.

The signal sequence occupies residues 1–17; it reads MLPGLALLLLAAWTARA. At 18–701 the chain is on the extracellular side; it reads LEVPTDGNAG…AEDVGSNKGA (684 aa). Positions 28 to 123 are GFLD subdomain; it reads LLAEPQIAMF…PYRCLVGEFV (96 aa). An E1 domain is found at 28–189; it reads LLAEPQIAMF…RGVEFVCCPL (162 aa). Disulfide bonds link C38–C62, C73–C117, C98–C105, C133–C187, C144–C174, and C158–C186. Position 96-110 (96-110) interacts with heparin; the sequence is NWCKRGRKQCKTHPH. The tract at residues 131–189 is cuBD subdomain; that stretch reads DKCKFLHQERMDVCETHLHWHTVAKETCSEKSTNLHDYGMLLPCGIDKFRGVEFVCCPL. The Cu(2+) site is built by H147, H151, and Y168. Residues 181–188 are zinc-binding; that stretch reads GVEFVCCP. Positions 183, 186, and 187 each coordinate Zn(2+). The span at 194-207 shows a compositional bias: acidic residues; the sequence is DNVDSADAEEDDSD. Residues 194-284 are disordered; it reads DNVDSADAEE…TTTTTTESVE (91 aa). S198 bears the Phosphoserine; by CK2 mark. S206 is modified (phosphoserine; by CK1). Y217 and Y262 each carry sulfotyrosine. Acidic residues predominate over residues 228–264; it reads VAEEEEVAEVEEEEADDDEDDEDGDEVEEEAEEPYEE. Low complexity predominate over residues 268–281; that stretch reads RTTSIATTTTTTTE. Cystine bridges form between C291-C341, C300-C324, and C316-C337. The 51-residue stretch at 291–341 folds into the BPTI/Kunitz inhibitor domain; the sequence is CSEQAETGPCRAMISRWYFDVTEGKCAPFFYGGCGGNRNNFDTEEYCMAVC. Y336 carries the post-translational modification Sulfotyrosine. Residues 344 to 365 carry the OX-2 motif; the sequence is VMSQSLRKTTREPLTRDPVKLP. One can recognise an E2 domain in the interval 374-565; sequence AVDKYLETPG…EEIQDEVDEL (192 aa). Residues 391–423 form a heparin-binding region; it reads FQKAKERLEAKHRERMSQVMREWEEAERQAKNL. The residue at position 441 (S441) is a Phosphoserine. The tract at residues 491 to 522 is heparin-binding; it reads FNMLKKYVRAEQKDRQHTLKHFEHVRMVDPKK. Y497 is modified (phosphotyrosine). The interval 523 to 540 is collagen-binding; sequence AAQIRSQVMTHLRVIYER. N-linked (GlcNAc...) asparagine glycans are attached at residues N542 and N571. Cu(2+)-binding residues include H677, Y681, H684, and H685. 4 residues coordinate Zn(2+): H677, Y681, H684, and H685. The interaction with PSEN1 stretch occupies residues 695 to 722; that stretch reads VGSNKGAIIGLMVGGVVIATVIVITLVM. Residues 702–722 form a helical membrane-spanning segment; it reads IIGLMVGGVVIATVIVITLVM. Residues 723-770 are Cytoplasmic-facing; it reads LKKKQYTSIHHGVVEVDAAVTPEERHLSKMQQNGYENPTYKFFEQMQN. The Basolateral sorting signal signature appears at 724–734; sequence KKKQYTSIHHG. Residue T729 is modified to Phosphothreonine. S730 is subject to Phosphoserine; by APP-kinase I. The interaction with G(o)-alpha stretch occupies residues 732 to 751; the sequence is HHGVVEVDAAVTPEERHLSK. T743 bears the Phosphothreonine; by CDK5 and MAPK10 mark. Positions 756 to 770 are required for the interaction with KIF5B and for anterograde transport in axons; it reads GYENPTYKFFEQMQN. Y757 carries the post-translational modification Phosphotyrosine; by ABL1. A YENPXY motif; contains endocytosis signal motif is present at residues 757-762; that stretch reads YENPTY. K763 is covalently cross-linked (Glycyl lysine isopeptide (Lys-Gly) (interchain with G-Cter in ubiquitin)).

It belongs to the APP family. In terms of assembly, binds, via its C-terminus, to the PID domain of several cytoplasmic proteins, including APBB family members, the APBA family, MAPK8IP1, SHC1 and NUMB and DAB1. Binding to DAB1 inhibits its serine phosphorylation. Interacts (via NPXY motif) with DAB2 (via PID domain); the interaction is impaired by tyrosine phosphorylation of the NPXY motif. Also interacts with GPCR-like protein BPP, APPBP1, IB1, KNS2 (via its TPR domains), APPBP2 (via BaSS) and DDB1. In vitro, it binds MAPT via the MT-binding domains. Associates with microtubules in the presence of ATP and in a kinesin-dependent manner. Interacts, through a C-terminal domain, with GNAO1. Amyloid-beta protein 42 binds CHRNA7 in hippocampal neurons. Amyloid-beta associates with HADH2. Interacts with CPEB1, ANKS1B and AGER. Interacts with ITM2B. Interacts with ITM2C. Interacts with IDE. Can form homodimers; dimerization is enhanced in the presence of Cu(2+) ions. Can form homodimers; this is promoted by heparin binding. Amyloid-beta protein 40 interacts with S100A9. CTF-alpha product of APP interacts with GSAP. Isoform APP695 interacts with SORL1 (via N-terminal ectodomain); this interaction retains APP in the trans-Golgi network and reduces processing into soluble APP-alpha and amyloid-beta peptides. Isoform APP770 interacts with SORL1. The C99 fragment also interacts with SORL1. Interacts with PLD3. Interacts with VDAC1. Interacts with NSG1; could regulate APP processing. Amyloid-beta protein 42 interacts with FPR2. Interacts (via transmembrane region) with PSEN1; the interaction is direct. Interacts with LRRK2. Interacts (via cytoplasmic domain) with KIF5B. Interacts (via C-terminus) with APBB2/FE65L1 (via C-terminus). Interacts (via intracellular domain) with APBB3. Proteolytically processed under normal cellular conditions. Cleavage either by alpha-secretase, beta-secretase or theta-secretase leads to generation and extracellular release of soluble APP peptides, S-APP-alpha and S-APP-beta, and the retention of corresponding membrane-anchored C-terminal fragments, C80, C83 and C99. Subsequent processing of C80 and C83 by gamma-secretase yields P3 peptides. This is the major secretory pathway and is non-amyloidogenic. Alternatively, presenilin/nicastrin-mediated gamma-secretase processing of C99 releases the amyloid-beta proteins, amyloid-beta protein 40 and amyloid-beta protein 42, major components of amyloid plaques, and the cytotoxic C-terminal fragments, gamma-CTF(50), gamma-CTF(57) and gamma-CTF(59). PSEN1 cleavage is more efficient with C83 than with C99 as substrate (in vitro). Amyloid-beta protein 40 and Amyloid-beta protein 42 are cleaved by ACE. Many other minor amyloid-beta peptides, amyloid-beta 1-X peptides, are found in cerebral spinal fluid (CSF) including the amyloid-beta X-15 peptides, produced from the cleavage by alpha-secretase. In terms of processing, proteolytically cleaved by caspases during neuronal apoptosis. Cleavage at Asp-739 by either caspase-3, -8 or -9 results in the production of the neurotoxic C31 peptide and the increased production of amyloid-beta peptides. Post-translationally, N- and O-glycosylated. Phosphorylation in the C-terminal on tyrosine, threonine and serine residues is neuron-specific. Phosphorylation can affect APP processing, neuronal differentiation and interaction with other proteins. Phosphorylated on Thr-743 in neuronal cells by Cdc5 kinase and Mapk10, in dividing cells by Cdc2 kinase in a cell-cycle dependent manner with maximal levels at the G2/M phase and, in vitro, by GSK-3-beta. The Thr-743 phosphorylated form causes a conformational change which reduces binding of Fe65 family members. In dopaminergic (DA) neurons, phosphorylation on Thr-743 by LRKK2 promotes the production and the nuclear translocation of the APP intracellular domain (AICD) which induces DA neuron apoptosis. Phosphorylation on Tyr-757 is required for SHC binding. Phosphorylated in the extracellular domain by casein kinases on both soluble and membrane-bound APP. This phosphorylation is inhibited by heparin. In terms of processing, trophic-factor deprivation triggers the cleavage of surface APP by beta-secretase to release sAPP-beta which is further cleaved to release an N-terminal fragment of APP (N-APP). Post-translationally, amyloid-beta peptides are degraded by IDE. Sulfated on tyrosine residues.

The protein resides in the cell membrane. The protein localises to the membrane. It is found in the perikaryon. It localises to the cell projection. Its subcellular location is the growth cone. The protein resides in the clathrin-coated pit. The protein localises to the early endosome. It is found in the cytoplasmic vesicle. It localises to the endoplasmic reticulum. Its subcellular location is the golgi apparatus. The protein resides in the secreted. The protein localises to the cell surface. It is found in the nucleus. It localises to the cytoplasm. Its function is as follows. Functions as a cell surface receptor and performs physiological functions on the surface of neurons relevant to neurite growth, neuronal adhesion and axonogenesis. Interaction between APP molecules on neighboring cells promotes synaptogenesis. Involved in cell mobility and transcription regulation through protein-protein interactions. Can promote transcription activation through binding to APBB1-KAT5 and inhibit Notch signaling through interaction with Numb. Couples to apoptosis-inducing pathways such as those mediated by G(o) and JIP. Inhibits G(o)-alpha ATPase activity. Acts as a kinesin I membrane receptor, mediating the axonal transport of beta-secretase and presenilin 1. By acting as a kinesin I membrane receptor, plays a role in axonal anterograde transport of cargo towards synapses in axons. May be involved in copper homeostasis/oxidative stress through copper ion reduction. In vitro, copper-metallated APP induces neuronal death directly or is potentiated through Cu(2+)-mediated low-density lipoprotein oxidation. Can regulate neurite outgrowth through binding to components of the extracellular matrix such as heparin and collagen I and IV. Induces a AGER-dependent pathway that involves activation of p38 MAPK, resulting in internalization of amyloid-beta peptide and mitochondrial dysfunction in cultured cortical neurons. Provides Cu(2+) ions for GPC1 which are required for release of nitric oxide (NO) and subsequent degradation of the heparan sulfate chains on GPC1. In terms of biological role, amyloid-beta peptides are lipophilic metal chelators with metal-reducing activity. Binds transient metals such as copper, zinc and iron. Functionally, the gamma-CTF peptides as well as the caspase-cleaved peptides, including C31, are potent enhancers of neuronal apoptosis. This Macaca fascicularis (Crab-eating macaque) protein is Amyloid-beta precursor protein.